The sequence spans 270 residues: 5'-AMP-activated protein kinase subunit beta-1 (270 aa).

The interval 1-44 is disordered; it reads MGNTSSERAALERQAGHKTPRRDSSGGAKDGDRPKILMDSPEDA. Gly2 carries the N-myristoyl glycine lipid modification. Thr4 is modified (phosphothreonine). 2 positions are modified to phosphoserine: Ser5 and Ser6. The segment covering 9 to 36 has biased composition (basic and acidic residues); the sequence is AALERQAGHKTPRRDSSGGAKDGDRPKI. Thr19 is subject to Phosphothreonine. Ser24 and Ser25 each carry phosphoserine; by autocatalysis. 3 positions are modified to phosphoserine: Ser40, Ser96, and Ser101. Positions 68–163 are glycogen-binding domain; the sequence is EANDKAPAQA…QVKKTDFEVF (96 aa). At Ser108 the chain carries Phosphoserine; by autocatalysis. At Thr148 the chain carries Phosphothreonine. Ser182 bears the Phosphoserine mark. Lys201 is subject to N6-succinyllysine.

Belongs to the 5'-AMP-activated protein kinase beta subunit family. AMPK is a heterotrimer of an alpha catalytic subunit (PRKAA1 or PRKAA2), a beta (PRKAB1 or PRKAB2) and a gamma non-catalytic subunits (PRKAG1, PRKAG2 or PRKAG3). Interacts with FNIP1 and FNIP2. Phosphorylated when associated with the catalytic subunit (PRKAA1 or PRKAA2). Phosphorylated by ULK1; leading to negatively regulate AMPK activity and suggesting the existence of a regulatory feedback loop between ULK1 and AMPK.

Its function is as follows. Non-catalytic subunit of AMP-activated protein kinase (AMPK), an energy sensor protein kinase that plays a key role in regulating cellular energy metabolism. In response to reduction of intracellular ATP levels, AMPK activates energy-producing pathways and inhibits energy-consuming processes: inhibits protein, carbohydrate and lipid biosynthesis, as well as cell growth and proliferation. AMPK acts via direct phosphorylation of metabolic enzymes, and by longer-term effects via phosphorylation of transcription regulators. Also acts as a regulator of cellular polarity by remodeling the actin cytoskeleton; probably by indirectly activating myosin. Beta non-catalytic subunit acts as a scaffold on which the AMPK complex assembles, via its C-terminus that bridges alpha (PRKAA1 or PRKAA2) and gamma subunits (PRKAG1, PRKAG2 or PRKAG3). This Mus musculus (Mouse) protein is 5'-AMP-activated protein kinase subunit beta-1 (Prkab1).